A 92-amino-acid chain; its full sequence is Large ribosomal subunit protein eL43 (92 aa).

The C4-type zinc-finger motif lies at 39–60 (CEFCGKFAVKRKAVGIWGCKDC).

This sequence belongs to the eukaryotic ribosomal protein eL43 family.

The protein is Large ribosomal subunit protein eL43 (RPL37A) of Pseudotsuga menziesii (Douglas-fir).